The sequence spans 84 residues: uncharacterized protein (84 aa).

3 helical membrane passes run 8–28 (IYFFTIACIIAVIYCVLVNLL), 30–50 (INVIPVVLAFSLILILTISTI), and 63–83 (VLFMLLVLAFFAYAIYKLYIP).

The protein resides in the cell membrane. This is an uncharacterized protein from Methanocaldococcus jannaschii (strain ATCC 43067 / DSM 2661 / JAL-1 / JCM 10045 / NBRC 100440) (Methanococcus jannaschii).